The chain runs to 477 residues: uncharacterized protein (477 aa).

12 helical membrane passes run 31 to 51, 60 to 80, 103 to 123, 130 to 150, 177 to 197, 205 to 225, 248 to 268, 291 to 311, 334 to 354, 359 to 379, 384 to 404, and 433 to 453; these read LLRLSLFQVSVGMAQVLLLGT, LGVPALVVAAMISIPVLVAPF, LWFGSLWQMGGLALMPFSLIL, MGPAWAGEAFAGVAFLMAGVG, LLYVMFLIGMGISAVIVGWLL, LIRVVQGCGAMTLVLNVIALW, AWGLLAAETGALRLLATVMVG, VGQTTWLTAGWAFGALVGFIW, IVAFTAVLFSPLFGSKVLFFA, IGLGSGMFGIATLTVAMMVVV, GIALGAWGAAQATAAGLAVFI, and VVYVTEIGLLFITLAVLGPLV.

Belongs to the PucC family.

It is found in the cell membrane. This is an uncharacterized protein from Rhodobacter capsulatus (Rhodopseudomonas capsulata).